Here is a 620-residue protein sequence, read N- to C-terminus: Mitochondrial Rho GTPase 2 (620 aa).

Over 1 to 594 (MKRDVRILLL…ELHTTSFWLR (594 aa)) the chain is Cytoplasmic. Positions 2-168 (KRDVRILLLG…FYYAQKAVLH (167 aa)) constitute a Miro 1 domain. GTP is bound by residues glycine 16, lysine 17, threonine 18, and serine 19. Threonine 18 is a binding site for Mg(2+). Mg(2+) contacts are provided by proline 35 and aspartate 57. Serine 59 lines the GTP pocket. Lysine 96 is covalently cross-linked (Glycyl lysine isopeptide (Lys-Gly) (interchain with G-Cter in ubiquitin)). GTP-binding residues include asparagine 118, lysine 119, aspartate 121, alanine 149, and lysine 150. A Glycyl lysine isopeptide (Lys-Gly) (interchain with G-Cter in ubiquitin) cross-link involves residue lysine 119. Lysine 164 is covalently cross-linked (Glycyl lysine isopeptide (Lys-Gly) (interchain with G-Cter in ubiquitin)). EF-hand domains lie at 184-219 (ACAQ…CFGH) and 304-339 (HGYQ…FPGP). Ca(2+) contacts are provided by aspartate 197, aspartate 199, aspartate 201, glutamate 208, aspartate 317, aspartate 319, aspartate 321, and glutamate 328. Residues 340–364 (PWGPQLPRHRPHRGRSAAPARVPLP) form a disordered region. The Miro 2 domain occupies 415-578 (RNVLLCKVLG…FARLATMATF (164 aa)). Residues glycine 427, glycine 429, lysine 430, and serine 431 each contribute to the GTP site. Mg(2+) contacts are provided by serine 431 and glutamate 473. Residues lysine 527, aspartate 529, and cysteine 558 each coordinate GTP. The chain crosses the membrane as a helical; Anchor for type IV membrane protein span at residues 595–617 (VALGAVGAAVAAILSFSLYRVLV). The Mitochondrial intermembrane portion of the chain corresponds to 618 to 620 (KSR).

This sequence belongs to the mitochondrial Rho GTPase family. As to quaternary structure, homodimer. Interacts with the kinesin-binding proteins TRAK1/OIP106 and TRAK2/GRIF1, forming a link between mitochondria and the trafficking apparatus of the microtubules. Interacts with ARMCX3. Found in a complex with KIF5B, OGT, RHOT1 and TRAK1. Post-translationally, ubiquitinated by PRKN in a PINK1-dependent manner, leading to its degradation.

It is found in the mitochondrion outer membrane. The enzyme catalyses GTP + H2O = GDP + phosphate + H(+). The catalysed reaction is ATP + H2O = ADP + phosphate + H(+). It carries out the reaction UTP + H2O = UDP + phosphate + H(+). Functionally, atypical mitochondrial nucleoside-triphosphatase (NTPase) involved in mitochondrial trafficking. Probably involved in control of anterograde transport of mitochondria and their subcellular distribution. Can hydrolyze GTP, ATP and UTP. This Sus scrofa (Pig) protein is Mitochondrial Rho GTPase 2 (RHOT2).